The chain runs to 488 residues: Integrin beta-like protein 1 (488 aa).

Positions 1 to 21 (MHAGAFINFVWALSLVSLLAA) are cleaved as a signal peptide. Disulfide bonds link Cys38/Cys65, Cys49/Cys63, Cys57/Cys68, Cys70/Cys83, Cys85/Cys106, Cys90/Cys104, Cys98/Cys109, Cys111/Cys120, Cys126/Cys153, Cys137/Cys151, Cys145/Cys156, Cys158/Cys172, Cys174/Cys196, Cys179/Cys194, Cys188/Cys199, Cys201/Cys210, Cys214/Cys241, Cys225/Cys239, Cys233/Cys244, Cys246/Cys263, Cys265/Cys290, Cys270/Cys288, Cys282/Cys293, Cys295/Cys304, Cys310/Cys337, Cys321/Cys335, Cys329/Cys340, Cys342/Cys355, Cys357/Cys378, Cys362/Cys376, Cys370/Cys381, Cys383/Cys392, Cys398/Cys425, Cys409/Cys423, Cys417/Cys428, Cys430/Cys442, Cys444/Cys465, Cys449/Cys463, Cys457/Cys468, and Cys470/Cys479. 10 consecutive I-EGF domains span residues 38-84 (CRLP…PLCE), 85-121 (CHDW…EACQ), 126-173 (CDLT…KYCE), 174-211 (CDDT…DKCE), 214-264 (CDIT…DTCE), 265-305 (CDER…RKCE), 310-356 (CALS…KNCE), 357-393 (CDDR…KLCQ), 398-443 (CNMT…EFCE), and 444-480 (CDDR…NACE). The I repeat unit spans residues 49–89 (CRTPDGSICSGRGSCDCGICLCEVKEAGKYYGPLCECHDWV). A cysteine-rich tandem repeats region spans residues 49-488 (CRTPDGSICS…CEIWLGSEYP (440 aa)). One copy of the II repeat lies at 90 to 136 (CHTYDGQVCAGHGQCDCGVCKCDVGWSGEACQYPTTCDLTRKKSNEM). An III repeat occupies 137-178 (CKNSQAVICSNAGTCQCGRCKCENSDNSGLIYGKYCECDDTE). An IV repeat occupies 179–224 (CFDDETQEICGGHGKCYCGNCYCEAGWHGDKCEFQCDITPWEIKKR). The V repeat unit spans residues 225-269 (CTSPDGKICSNRGTCVCGECTCHDVDPTGDWGDIHGDTCECDERN). A VI repeat occupies 270-320 (CKSVYDRYSDDFCSGHGQCNCGRCDCKDGWTGRKCEHPRACALSIEESKKK). A VII repeat occupies 321–361 (CQGSASQPCSGRGKCECGQCTCFPPGDSKVYGKNCECDDRQ). The stretch at 362 to 408 (CEDLEGKICGEHGTCSCGRCICEAGWFGKLCQHERKCNMTEEESKSQ) is one VIII repeat. A glycan (N-linked (GlcNAc...) asparagine) is linked at Asn399. The IX repeat unit spans residues 409 to 448 (CESDDGILCSGKGSCHCGKCICSPQEWYVSGEFCECDDRD). A X repeat occupies 449–488 (CDKHDGLICTGNGICNCGNCECWEGWNGNACEIWLGSEYP).

It is found in the secreted. This is Integrin beta-like protein 1 (itgbl1) from Xenopus laevis (African clawed frog).